Reading from the N-terminus, the 474-residue chain is Glutamate--tRNA ligase (474 aa).

The short motif at 9-19 is the 'HIGH' region element; it reads PSPTGLLHMGG. The 'KMSKS' region motif lies at 238-242; it reads KLSKR. Lysine 241 is an ATP binding site.

The protein belongs to the class-I aminoacyl-tRNA synthetase family. Glutamate--tRNA ligase type 1 subfamily. Monomer.

The protein localises to the cytoplasm. The enzyme catalyses tRNA(Glu) + L-glutamate + ATP = L-glutamyl-tRNA(Glu) + AMP + diphosphate. Its function is as follows. Catalyzes the attachment of glutamate to tRNA(Glu) in a two-step reaction: glutamate is first activated by ATP to form Glu-AMP and then transferred to the acceptor end of tRNA(Glu). This chain is Glutamate--tRNA ligase, found in Buchnera aphidicola subsp. Cinara cedri (strain Cc).